The sequence spans 194 residues: RNA polymerase II subunit A C-terminal domain phosphatase SSU72 like protein 2 (194 aa).

This sequence belongs to the SSU72 phosphatase family.

It is found in the nucleus. The enzyme catalyses O-phospho-L-seryl-[protein] + H2O = L-seryl-[protein] + phosphate. It carries out the reaction O-phospho-L-threonyl-[protein] + H2O = L-threonyl-[protein] + phosphate. Its function is as follows. Protein phosphatase that catalyzes the dephosphorylation of the C-terminal domain of RNA polymerase II. Plays a role in RNA processing and termination. The chain is RNA polymerase II subunit A C-terminal domain phosphatase SSU72 like protein 2 from Homo sapiens (Human).